A 262-amino-acid chain; its full sequence is Shikimate dehydrogenase (NADP(+)) (262 aa).

Residues 15–17 (SRS) and threonine 62 each bind shikimate. Lysine 66 (proton acceptor) is an active-site residue. Residue glutamate 78 coordinates NADP(+). Shikimate-binding residues include asparagine 87 and aspartate 102. NADP(+) contacts are provided by residues 126–130 (GAGGA), 150–155 (NRTLAR), and methionine 214. Tyrosine 216 contributes to the shikimate binding site. Glycine 236 contributes to the NADP(+) binding site.

It belongs to the shikimate dehydrogenase family. Homodimer.

The catalysed reaction is shikimate + NADP(+) = 3-dehydroshikimate + NADPH + H(+). It participates in metabolic intermediate biosynthesis; chorismate biosynthesis; chorismate from D-erythrose 4-phosphate and phosphoenolpyruvate: step 4/7. Involved in the biosynthesis of the chorismate, which leads to the biosynthesis of aromatic amino acids. Catalyzes the reversible NADPH linked reduction of 3-dehydroshikimate (DHSA) to yield shikimate (SA). This is Shikimate dehydrogenase (NADP(+)) from Acinetobacter baumannii (strain SDF).